A 192-amino-acid polypeptide reads, in one-letter code: Probable apo-citrate lyase phosphoribosyl-dephospho-CoA transferase (192 aa).

Belongs to the CitX family.

It catalyses the reaction apo-[citrate lyase ACP] + 2'-(5''-triphospho-alpha-D-ribosyl)-3'-dephospho-CoA = holo-[citrate lyase ACP] + diphosphate. Transfers 2-(5''-triphosphoribosyl)-3'-dephosphocoenzyme-A on a serine residue to the apo-acyl carrier protein (gamma chain) of the citrate lyase to yield holo-acyl carrier protein. This Streptococcus pyogenes serotype M3 (strain ATCC BAA-595 / MGAS315) protein is Probable apo-citrate lyase phosphoribosyl-dephospho-CoA transferase.